The primary structure comprises 20 residues: Isocitrate dehydrogenase [NADP] (20 aa).

It belongs to the isocitrate and isopropylmalate dehydrogenases family. Requires Mn(2+) as cofactor. Mg(2+) is required as a cofactor.

The protein resides in the cytoplasm. The catalysed reaction is D-threo-isocitrate + NADP(+) = 2-oxoglutarate + CO2 + NADPH. The polypeptide is Isocitrate dehydrogenase [NADP] (Naegleria fowleri (Brain eating amoeba)).